The chain runs to 609 residues: Numb-like protein (609 aa).

5 disordered regions span residues 1 to 68 (MSRS…QWQA), 223 to 283 (GSFR…PVAA), 372 to 421 (ASAG…EEVS), 434 to 464 (QQQQQQQQQQQQQAASVAPVPTMPPALQPFP), and 537 to 609 (AGAF…EIEL). Residues 19–29 (PPAPCGAPGPP) are compositionally biased toward pro residues. In terms of domain architecture, PID spans 74-223 (RKGTCSFPVR…ASRTSFAREG (150 aa)). Phosphoserine occurs at positions 224 and 228. Residues 233–245 (PAEREAPDKKKAE) are compositionally biased toward basic and acidic residues. Low complexity predominate over residues 246 to 259 (AAAAPTVAPGPAQP). Ser-263 carries the post-translational modification Phosphoserine. Thr-279 carries the post-translational modification Phosphothreonine. Basic and acidic residues predominate over residues 409 to 418 (TPSEAERWLE). Ser-411 is subject to Phosphoserine. The segment covering 434-446 (QQQQQQQQQQQQQ) has biased composition (low complexity). Pro residues-rich tracts occupy residues 454–464 (PTMPPALQPFP) and 558–573 (NGAPWPPEPAPAPAPE).

In terms of assembly, interacts (via PTB domain) with MAP3K7IP2 (via C-terminal). Interacts (via C-terminal) with TRAF6 (via TRAF domains). Associates with EPS15 and NOTCH1.

It is found in the cytoplasm. In terms of biological role, plays a role in the process of neurogenesis. Required throughout embryonic neurogenesis to maintain neural progenitor cells, also called radial glial cells (RGCs), by allowing their daughter cells to choose progenitor over neuronal cell fate. Not required for the proliferation of neural progenitor cells before the onset of embryonic neurogenesis. Also required postnatally in the subventricular zone (SVZ) neurogenesis by regulating SVZ neuroblasts survival and ependymal wall integrity. Negative regulator of NF-kappa-B signaling pathway. The inhibition of NF-kappa-B activation is mediated at least in part, by preventing MAP3K7IP2 to interact with polyubiquitin chains of TRAF6 and RIPK1 and by stimulating the 'Lys-48'-linked polyubiquitination and degradation of TRAF6 in cortical neurons. This Homo sapiens (Human) protein is Numb-like protein (NUMBL).